The primary structure comprises 266 residues: Small ribosomal subunit protein uS2 (266 aa).

This sequence belongs to the universal ribosomal protein uS2 family.

The protein is Small ribosomal subunit protein uS2 of Bartonella tribocorum (strain CIP 105476 / IBS 506).